The chain runs to 657 residues: MRGCLQSVKWLTSAVRQSQSLTSSTRFPRRLFNTSTLHYAQGRKPVSELEQRIAAIPIERFRNFCIVAHVDHGKSTLSDRLLELTGTIEAGANKQVLDKLDVERERGITVKAQTCSMLYNHQGEDYLLHLVDTPGHVDFRAEVSRSYASCGGALLLVDASQGIQAQTVANFYLAFAEGLKLVPVINKVDLPSADPERALDQMKNTFELDPKSAVLVSAKTGLNVEQLLPTVIEQVPAPVGDHTKPLRMLLVDSWYSTYKGVILLVRIFDGEVRAGDQVVSFATGLKYFVGEVGIMYPGQTAQSVLRAGQVGYIYFNPAMKRSQEAKVGDTYTKVGSEKLVQPLPGFEEPKAMVFVAAYPVDASDFPHLEDSINQLTLNDRSVTLQKESSEALGAGFRLGFLGTLHCSVFEDRLRQEHGASIIITPPTVPFKVIWKDGKEEIVTNPALFPEEETLRAKVAELQEPFVLATLTFPEEYLGRVIELCESNRGEQKNLEFFTSTQVILKYELPLAQLVDDFFGKLKGSTKGYASLDYEESGWRRSNISKLQLLVNKVPVDAVSRVVHASQVQRLGRLWVSKFKEHVDRQMFEIVIQAAVGRNVVARESIKPFRKDVLQKLHASDITRRKKLLEKQKEGRKRLKAVGNVVIEHKAFQAFLAK.

A mitochondrion-targeting transit peptide spans methionine 1–tyrosine 39. One can recognise a tr-type G domain in the interval glutamate 59–valine 239. GTP-binding positions include alanine 68–serine 75, aspartate 132–histidine 136, and asparagine 186–aspartate 189.

This sequence belongs to the TRAFAC class translation factor GTPase superfamily. Classic translation factor GTPase family. LepA subfamily.

The protein localises to the mitochondrion inner membrane. It carries out the reaction GTP + H2O = GDP + phosphate + H(+). Promotes mitochondrial protein synthesis. May act as a fidelity factor of the translation reaction, by catalyzing a one-codon backward translocation of tRNAs on improperly translocated ribosomes. Binds to mitochondrial ribosomes in a GTP-dependent manner. The polypeptide is Translation factor GUF1, mitochondrial (Blastomyces gilchristii (strain SLH14081) (Blastomyces dermatitidis)).